An 82-amino-acid polypeptide reads, in one-letter code: Sec-independent protein translocase protein TatA (82 aa).

The chain crosses the membrane as a helical span at residues 1-21 (MGGISIWQLLIIAVIVVLLFG).

It belongs to the TatA/E family. In terms of assembly, the Tat system comprises two distinct complexes: a TatABC complex, containing multiple copies of TatA, TatB and TatC subunits, and a separate TatA complex, containing only TatA subunits. Substrates initially bind to the TatABC complex, which probably triggers association of the separate TatA complex to form the active translocon.

The protein localises to the cell inner membrane. Part of the twin-arginine translocation (Tat) system that transports large folded proteins containing a characteristic twin-arginine motif in their signal peptide across membranes. TatA could form the protein-conducting channel of the Tat system. The chain is Sec-independent protein translocase protein TatA from Vibrio cholerae serotype O1 (strain ATCC 39315 / El Tor Inaba N16961).